The sequence spans 320 residues: ATP-dependent 6-phosphofructokinase (320 aa).

ATP is bound at residue Gly-12. 22 to 26 (RGVVR) is a binding site for ADP. ATP contacts are provided by residues 73-74 (RF) and 103-106 (GDGS). Asp-104 serves as a coordination point for Mg(2+). 126-128 (TID) is a substrate binding site. Asp-128 acts as the Proton acceptor in catalysis. Arg-155 contacts ADP. Substrate contacts are provided by residues Arg-163 and 170–172 (MGR). ADP contacts are provided by residues 186 to 188 (GCE), Lys-212, and 214 to 216 (KKH). Residues Glu-223, Arg-244, and 250-253 (HIQR) contribute to the substrate site.

The protein belongs to the phosphofructokinase type A (PFKA) family. ATP-dependent PFK group I subfamily. Prokaryotic clade 'B1' sub-subfamily. In terms of assembly, homotetramer. Mg(2+) is required as a cofactor.

It localises to the cytoplasm. It carries out the reaction beta-D-fructose 6-phosphate + ATP = beta-D-fructose 1,6-bisphosphate + ADP + H(+). It functions in the pathway carbohydrate degradation; glycolysis; D-glyceraldehyde 3-phosphate and glycerone phosphate from D-glucose: step 3/4. With respect to regulation, allosterically activated by ADP and other diphosphonucleosides, and allosterically inhibited by phosphoenolpyruvate. Its function is as follows. Catalyzes the phosphorylation of D-fructose 6-phosphate to fructose 1,6-bisphosphate by ATP, the first committing step of glycolysis. This chain is ATP-dependent 6-phosphofructokinase, found in Vibrio vulnificus (strain CMCP6).